The sequence spans 592 residues: MPDNILVAVAWPYANGPFHVGHIAGAYLPADVFARYQRLRGNRVLMVSGSDCHGTPITIAAEREGITPQDVIRRYHPTFLKTFQTLGISFDLFTQTYTDNHYRVTTDIFLRLLENGYLYKETMVGSYSETLGRFLPDRFVEGTCPNCGYPRARGDQCDGCGHLHDPQDLIAPRSVLDGAPVTFRETEHFFLDLAKLEPQLRAWLDSVDRSYWRPNTLLFTQNWLREGLRGRAITRDLEWGVPVPVDDPTFKDKRIYVWFDAVIGYYSASIEWAQRSGAPDAWQEWWVCRPDGSSPARSYYFIGKDNIPFHTIIWPAILIGYGDLALPYDVPANEFLNLEGDKMSTSRNWALWAPEIEERYQSDAIRYYLIANGPETRDSNWSWADFVQRVNSELVATWGNLANRVISLTHRNFGAVPQPGALIDADRQLIAATQQAFEQVTTLLEGVKLRAALQEAMALAQTANQYLSDQEPWKLVKSDQERAATVLFVALRTVDTLKTLFCPFLPFSSQRLHELLGYSGTIAPQPYVEETDAPDGAPRLILTGDYTTEAGLWTPSVLAPGQPIHAPAPLFQKLDESIVADELARLHAKVRS.

The 'HIGH' region motif lies at 12-22; sequence PYANGPFHVGH. Residues C144, C147, C157, and C160 each coordinate Zn(2+). The 'KMSKS' region signature appears at 342–346; the sequence is KMSTS. T345 serves as a coordination point for ATP.

The protein belongs to the class-I aminoacyl-tRNA synthetase family. MetG type 1 subfamily. Monomer. Requires Zn(2+) as cofactor.

It is found in the cytoplasm. It catalyses the reaction tRNA(Met) + L-methionine + ATP = L-methionyl-tRNA(Met) + AMP + diphosphate. In terms of biological role, is required not only for elongation of protein synthesis but also for the initiation of all mRNA translation through initiator tRNA(fMet) aminoacylation. The polypeptide is Methionine--tRNA ligase (Roseiflexus sp. (strain RS-1)).